A 186-amino-acid polypeptide reads, in one-letter code: Testis-expressed protein 36 (186 aa).

A disordered region spans residues 1-52 (MTKGRRFNPPSDKDGRWFPHIGLTQKTPESITSATSKEPQSPHLPRQAEGKL). The segment covering 24-39 (TQKTPESITSATSKEP) has biased composition (polar residues).

This is Testis-expressed protein 36 (TEX36) from Homo sapiens (Human).